A 255-amino-acid polypeptide reads, in one-letter code: 3-alpha-(or 20-beta)-hydroxysteroid dehydrogenase (255 aa).

An NAD(+)-binding site is contributed by 10–34 (IITGGARGLGAEAARQAVAAGARVV). Ser139 is a substrate binding site. Tyr152 functions as the Proton acceptor in the catalytic mechanism.

Belongs to the short-chain dehydrogenases/reductases (SDR) family. In terms of assembly, homotetramer.

The catalysed reaction is androstan-3alpha,17beta-diol + NAD(+) = 17beta-hydroxyandrostanone + NADH + H(+). Its pathway is lipid metabolism; C21-steroid hormone metabolism. The polypeptide is 3-alpha-(or 20-beta)-hydroxysteroid dehydrogenase (Streptomyces exfoliatus (Streptomyces hydrogenans)).